The chain runs to 213 residues: Glycerol-3-phosphate acyltransferase (213 aa).

6 helical membrane-spanning segments follow: residues 2 to 22 (ITIV…GLWI), 54 to 74 (MATF…PIMF), 80 to 100 (SPLI…FAGF), 110 to 130 (AGVV…VFFG), 143 to 163 (VTAS…GFIL), and 165 to 185 (NYDP…IIRH).

It belongs to the PlsY family. In terms of assembly, probably interacts with PlsX.

The protein resides in the cell membrane. It carries out the reaction an acyl phosphate + sn-glycerol 3-phosphate = a 1-acyl-sn-glycero-3-phosphate + phosphate. Its pathway is lipid metabolism; phospholipid metabolism. Catalyzes the transfer of an acyl group from acyl-phosphate (acyl-PO(4)) to glycerol-3-phosphate (G3P) to form lysophosphatidic acid (LPA). This enzyme utilizes acyl-phosphate as fatty acyl donor, but not acyl-CoA or acyl-ACP. The protein is Glycerol-3-phosphate acyltransferase of Streptococcus pneumoniae (strain Taiwan19F-14).